The sequence spans 244 residues: 1-(5-phosphoribosyl)-5-[(5-phosphoribosylamino)methylideneamino] imidazole-4-carboxamide isomerase (244 aa).

Aspartate 9 acts as the Proton acceptor in catalysis. The Proton donor role is filled by aspartate 131.

Belongs to the HisA/HisF family.

Its subcellular location is the cytoplasm. It catalyses the reaction 1-(5-phospho-beta-D-ribosyl)-5-[(5-phospho-beta-D-ribosylamino)methylideneamino]imidazole-4-carboxamide = 5-[(5-phospho-1-deoxy-D-ribulos-1-ylimino)methylamino]-1-(5-phospho-beta-D-ribosyl)imidazole-4-carboxamide. The protein operates within amino-acid biosynthesis; L-histidine biosynthesis; L-histidine from 5-phospho-alpha-D-ribose 1-diphosphate: step 4/9. This chain is 1-(5-phosphoribosyl)-5-[(5-phosphoribosylamino)methylideneamino] imidazole-4-carboxamide isomerase, found in Campylobacter jejuni subsp. jejuni serotype O:6 (strain 81116 / NCTC 11828).